Here is a 642-residue protein sequence, read N- to C-terminus: Voltage-gated potassium channel KCNC2 (642 aa).

Over 1 to 233 (MGKIESNERV…EDPYSSRAAR (233 aa)) the chain is Cytoplasmic. Positions 45-98 (DCLTAAGDKLQPLPPPLSPPPRPPPLSPVPSGCFEGGAGNCSSHGGNGGNGGSD) are disordered. A compositionally biased stretch (pro residues) spans 56 to 72 (PLPPPLSPPPRPPPLSP). Gly residues predominate over residues 78 to 98 (FEGGAGNCSSHGGNGGNGGSD). Residues His-128, Cys-134, Cys-155, and Cys-156 each coordinate Zn(2+). Residues 234–254 (FIAFASLFFILVSITTFCLET) traverse the membrane as a helical segment. 2 N-linked (GlcNAc...) asparagine glycosylation sites follow: Asn-263 and Asn-270. The chain crosses the membrane as a helical span at residues 287–307 (TYVEGVCVVWFTFEFLVRIVF). The Cytoplasmic portion of the chain corresponds to 308 to 317 (SPNKLEFIKN). Residues 318–338 (LLNIIDFVAILPFYLEVGLSG) traverse the membrane as a helical segment. Residues 350–372 (FLRVVRFVRILRIFKLTRHFVGL) traverse the membrane as a helical; Voltage-sensor segment. At 373–385 (RVLGHTLRASTNE) the chain is on the cytoplasmic side. A helical membrane pass occupies residues 386–406 (FLLLIIFLALGVLIFATMIYY). K(+) contacts are provided by Thr-441, Leu-442, Gly-443, and Tyr-444. The Selectivity filter signature appears at 441–446 (TLGYGD). The helical transmembrane segment at 457-477 (VGALCALAGVLTIAMPVPVIV) threads the bilayer. The Cytoplasmic portion of the chain corresponds to 478–642 (NNFGMYYSLA…RSRSPIPSIL (165 aa)). Residues 542 to 576 (SVLSGDDSTGSEPPLSPPERLPIRRSSTRDKNRRG) are disordered. A Phosphoserine modification is found at Ser-604.

It belongs to the potassium channel family. C (Shaw) (TC 1.A.1.2) subfamily. Kv3.2/KCNC2 sub-subfamily. In terms of assembly, homotetramer and heterotetramer with other channel-forming alpha subunits, such as KCNC1. Interacts with KCNC1. Homotetramer or heterotetramer channel activity is regulated by association with modulating ancillary subunits such as KCNE1, KCNE2 and KCNE3, creating a functionally diverse range of channel complexes. Interacts with KCNE1, KCNE2 and KCNE3. In terms of processing, phosphorylated by PKA in cortical synaptosomes. cAMP-dependent phosphorylation inhibits channel activity. Histamine H2 receptor- and PKA-induced phosphorylation extends action potential spike duration, reduces action potential spike amplitude, sustains maximum firing frequency in hippocampal interneurons; also reduces the incidence of high-frequency oscillations in hippocampal CA3 pyramidal cell layers. Weakly expressed in the brain at postnatal age day 7 (P7) and increased at P60. Not detectable in newborn hippocampus. Expressed weakly at P7 in the early developing hippocampus, increasing progressively and reaching a plateau of expression at P14 that is maintained throughout P51. Expressed in paravalbumin- and somatostain-containing inhibitory interneurons of the hippocampus; in the CA1/CA3 stratum oriens-alveus and stratum pyramidale and in cells within the hilus and subgranular layer of the dentate gyrus (DG). Strongly expressed in parvalbumin (PV)-containing fast-spiking GABAergic inhibitor interneurons in deep cortical layers V and VI. Also expressed in non-fast-spiking calbindin (CB)- and/or somatostatin (SOM)-containing interneurons in deep cortical layers V and VI. Expressed in starburst amacrine cells of the retina in the inner nuclear layer (INL) and ganglion cell layer (GCL). Expressed in the suprachiasmatic nucleus (SCN) (at protein level). Expressed in the early developing brain, increasing progressively until P14.

It localises to the cell membrane. The protein localises to the membrane. The protein resides in the perikaryon. Its subcellular location is the cell projection. It is found in the axon. It localises to the dendrite. The protein localises to the postsynaptic cell membrane. The protein resides in the presynaptic cell membrane. Its subcellular location is the synapse. It is found in the synaptosome. It localises to the apical cell membrane. The protein localises to the basolateral cell membrane. It catalyses the reaction K(+)(in) = K(+)(out). Its activity is regulated as follows. Inhibited by millimolar levels of tetraethylammonium (TEA). Contrary to other channels, inhibited only by millimolar levels of 4-aminopyridine (4-AP). Inhibited by Stichodactyla helianthus peptide ShK. Its function is as follows. Voltage-gated potassium channel that mediates transmembrane potassium transport in excitable membranes, primarily in the brain. Contributes to the regulation of the fast action potential repolarization and in sustained high-frequency firing in neurons of the central nervous system. Homotetramer channels mediate delayed-rectifier voltage-dependent potassium currents that activate rapidly at high-threshold voltages and inactivate slowly. Forms tetrameric channels through which potassium ions pass in accordance with their electrochemical gradient. The channel alternates between opened and closed conformations in response to the voltage difference across the membrane. Can form functional homotetrameric and heterotetrameric channels that contain variable proportions of KCNC1, and possibly other family members as well; channel properties depend on the type of alpha subunits that are part of the channel. Channel properties may be modulated by either the association with ancillary subunits, such as KCNE1, KCNE2 and KCNE3 or indirectly by nitric oxide (NO) through a cGMP- and PKG-mediated signaling cascade, slowing channel activation and deactivation of delayed rectifier potassium channels. Contributes to fire sustained trains of very brief action potentials at high frequency in thalamocortical and suprachiasmatic nucleus (SCN) neurons, in hippocampal and neocortical interneurons and in retinal ganglion cells. Sustained maximal action potential firing frequency in inhibitory hippocampal interneurons is negatively modulated by histamine H2 receptor activation in a cAMP- and protein kinase (PKA) phosphorylation-dependent manner. Plays a role in maintaining the fidelity of synaptic transmission in neocortical GABAergic interneurons by generating action potential (AP) repolarization at nerve terminals, thus reducing spike-evoked calcium influx and GABA neurotransmitter release. Required for long-range synchronization of gamma oscillations over distance in the neocortex. Contributes to the modulation of the circadian rhythm of spontaneous action potential firing in suprachiasmatic nucleus (SCN) neurons in a light-dependent manner. This chain is Voltage-gated potassium channel KCNC2, found in Mus musculus (Mouse).